A 348-amino-acid polypeptide reads, in one-letter code: Succinoglycan biosynthesis protein ExoO (348 aa).

The segment at His-322–Gly-348 is disordered. Low complexity predominate over residues Ala-324–Ala-334.

This sequence belongs to the glycosyltransferase 2 family.

The protein localises to the cytoplasm. It participates in glycan metabolism; exopolysaccharide biosynthesis. In terms of biological role, glycosyltransferase required for the synthesis of succinoglycan (EPS I). Needed for the addition of the fifth sugar (glucose), catalyzes the formation of a beta-1,6 linkage between the fourth and fifth sugar. This chain is Succinoglycan biosynthesis protein ExoO (exoO), found in Rhizobium meliloti (strain 1021) (Ensifer meliloti).